The chain runs to 202 residues: ATP-dependent Clp protease proteolytic subunit (202 aa).

S106 acts as the Nucleophile in catalysis. The active site involves H131.

It belongs to the peptidase S14 family. Fourteen ClpP subunits assemble into 2 heptameric rings which stack back to back to give a disk-like structure with a central cavity, resembling the structure of eukaryotic proteasomes.

It localises to the cytoplasm. The enzyme catalyses Hydrolysis of proteins to small peptides in the presence of ATP and magnesium. alpha-casein is the usual test substrate. In the absence of ATP, only oligopeptides shorter than five residues are hydrolyzed (such as succinyl-Leu-Tyr-|-NHMec, and Leu-Tyr-Leu-|-Tyr-Trp, in which cleavage of the -Tyr-|-Leu- and -Tyr-|-Trp bonds also occurs).. Cleaves peptides in various proteins in a process that requires ATP hydrolysis. Has a chymotrypsin-like activity. Plays a major role in the degradation of misfolded proteins. This Albidiferax ferrireducens (strain ATCC BAA-621 / DSM 15236 / T118) (Rhodoferax ferrireducens) protein is ATP-dependent Clp protease proteolytic subunit.